Reading from the N-terminus, the 411-residue chain is MRRRRAGGRTMVERASKFVLVVAGSVCFMLILYQYAGPGLSLGAPGGRAPPDDLDLFPTPDPHYEKKYYFPVRELERSLRFDMKGDDVIVFLHIQKTGGTTFGRHLVQNVRLEVPCDCRPGQKKCTCYRPNRRETWLFSRFSTGWSCGLHADWTELTNCVPGVLDRRDSAALRTPRKFYYITLLRDPVSRYLSEWRHVQRGATWKTSLHMCDGRTPTPEELPPCYEGTDWSGCTLQEFMDCPYNLANNRQVRMLADLSLVGCYNLSFIPEGKRAQLLLESAKKNLRGMAFFGLTEFQRKTQYLFERTFNLKFIRPFMQYNSTRAGGVEVDEDTIRRIEELNDLDMQLYDYAKDLFQQRYQYKRQLERREQRLRSREERLLHRAKEALPREDADEPGRVPTEDYMSHIIEKW.

Residues 11–17 (MVERASK) lie on the Cytoplasmic side of the membrane. The chain crosses the membrane as a helical; Signal-anchor for type II membrane protein span at residues 18 to 37 (FVLVVAGSVCFMLILYQYAG). The Lumenal portion of the chain corresponds to 38 to 411 (PGLSLGAPGG…DYMSHIIEKW (374 aa)). 93-101 (HIQKTGGTT) is a binding site for 3'-phosphoadenylyl sulfate. Residues 123–124 (KK), arginine 140, tryptophan 145, and histidine 150 contribute to the substrate site. Histidine 150 serves as the catalytic Proton acceptor. The 3'-phosphoadenylyl sulfate site is built by arginine 185 and serine 193. Histidine 197 and tryptophan 204 together coordinate substrate. Asparagine 264 carries an N-linked (GlcNAc...) asparagine glycan. 317 to 319 (MQY) provides a ligand contact to 3'-phosphoadenylyl sulfate. Asparagine 320 is a glycosylation site (N-linked (GlcNAc...) asparagine). A 3'-phosphoadenylyl sulfate-binding site is contributed by 323–324 (RA). Residues 352 to 387 (KDLFQQRYQYKRQLERREQRLRSREERLLHRAKEAL) are a coiled coil.

The protein belongs to the sulfotransferase 6 family. In terms of processing, N-glycosylated. As to expression, expressed in fetal brain.

Its subcellular location is the membrane. The enzyme catalyses alpha-D-glucosaminyl-[heparan sulfate](n) + 3'-phosphoadenylyl sulfate = 6-sulfo-alpha-D-glucosaminyl-[heparan sulfate](n) + adenosine 3',5'-bisphosphate + H(+). In terms of biological role, 6-O-sulfation enzyme which catalyzes the transfer of sulfate from 3'-phosphoadenosine 5'-phosphosulfate (PAPS) to position 6 of the N-sulfoglucosamine residue (GlcNS) of heparan sulfate. Critical for normal neuronal development where it may play a role in neuron branching. May also play a role in limb development. May prefer iduronic acid. This Homo sapiens (Human) protein is Heparan-sulfate 6-O-sulfotransferase 1.